Consider the following 539-residue polypeptide: Nucleoporin NUP60 (539 aa).

4 positions are modified to phosphoserine: Ser-10, Ser-49, Ser-81, and Ser-89. A disordered region spans residues 44–80 (DSARVSPRNNVANKQPRNESFNRRISSMPGGYFHSEI). A coiled-coil region spans residues 91–118 (VVSAVGEARNDIENKEEEYDETHETNIS). Phosphoserine occurs at positions 162, 171, 214, and 222. Composition is skewed to polar residues over residues 242 to 252 (TANTSAQSIAS) and 258 to 267 (SGVSKSAPSK). Disordered regions lie at residues 242–267 (TANT…APSK), 305–329 (IRKH…TTVK), and 347–493 (NATK…GKHI). The segment covering 347–359 (NATKISPSAPSKD) has biased composition (polar residues). Phosphoserine occurs at positions 352, 360, 374, and 382. 2 stretches are compositionally biased toward polar residues: residues 395-433 (SAFN…TNLQ) and 448-485 (GDST…LSQE). FXF repeat units follow at residues 399-401 (FSF) and 427-429 (FNF). Thr-460 is modified (phosphothreonine). One copy of the FXF 3 repeat lies at 469 to 471 (FVF). A phosphoserine mark is found at Ser-480 and Ser-483. Residues 509 to 511 (FDF) form an FXF 4 repeat.

Component of the nuclear pore complex (NPC). NPC constitutes the exclusive means of nucleocytoplasmic transport. NPCs allow the passive diffusion of ions and small molecules and the active, nuclear transport receptor-mediated bidirectional transport of macromolecules such as proteins, RNAs, ribonucleoparticles (RNPs), and ribosomal subunits across the nuclear envelope. Due to its 8-fold rotational symmetry, all subunits are present with 8 copies or multiples thereof. Binds to NUP1 and NUP2 forming the nuclear basket and the distal ring. The interaction with NUP2 is GSP1-GTP-dependent. Interacts through its FG repeats with karyopherins, such as KAP123 and KAP95-SRP1 (KAP60). Also interacts with GSP1-GTP and SRM1 (PRP20), where NUP60 reduces SRM1 activity, thus inhibiting GSP1 guanine nucleotide dissociation. Phosphorylated by CDC28.

The protein resides in the nucleus. It is found in the nuclear pore complex. It localises to the nucleus membrane. Functions as a component of the nuclear pore complex (NPC). NPC components, collectively referred to as nucleoporins (NUPs), can play the role of both NPC structural components and of docking or interaction partners for transiently associated nuclear transport factors. Active directional transport is assured by both, a Phe-Gly (FG) repeat affinity gradient for these transport factors across the NPC and a transport cofactor concentration gradient across the nuclear envelope (GSP1 and GSP2 GTPases associated predominantly with GTP in the nucleus, with GDP in the cytoplasm). This is Nucleoporin NUP60 (NUP60) from Saccharomyces cerevisiae (strain ATCC 204508 / S288c) (Baker's yeast).